The chain runs to 983 residues: Inner tegument protein (983 aa).

Residues 474–983 (LNVNTHFAVQ…TSVSLPPASP (510 aa)) are interaction with large tegument protein. The disordered stretch occupies residues 902 to 932 (PWESAPQPPRLRMTPDTDHEESTAGATSVPE). The span at 914–923 (MTPDTDHEES) shows a compositional bias: basic and acidic residues.

This sequence belongs to the herpesviridae inner tegument protein family. Interacts (via C-terminus) with the large tegument protein/LTP (via N-terminus).

The protein resides in the virion tegument. It is found in the host cytoplasm. It localises to the host nucleus. Its subcellular location is the host Golgi apparatus. The protein localises to the host trans-Golgi network. Plays an essential role in cytoplasmic secondary envelopment during viral egress. Interacts with the capsid via the large tegument protein/LTP and participates in its transport to the host trans-Golgi network (TGN) where secondary envelopment occurs. Modulates tegumentation and capsid accumulation at the viral assembly complex. This Homo sapiens (Human) protein is Inner tegument protein (UL47).